A 273-amino-acid chain; its full sequence is Putative phosphoenolpyruvate synthase regulatory protein (273 aa).

Residue 153 to 160 (GVSRCGKT) participates in ADP binding.

Belongs to the pyruvate, phosphate/water dikinase regulatory protein family. PSRP subfamily.

It carries out the reaction [pyruvate, water dikinase] + ADP = [pyruvate, water dikinase]-phosphate + AMP + H(+). The catalysed reaction is [pyruvate, water dikinase]-phosphate + phosphate + H(+) = [pyruvate, water dikinase] + diphosphate. Its function is as follows. Bifunctional serine/threonine kinase and phosphorylase involved in the regulation of the phosphoenolpyruvate synthase (PEPS) by catalyzing its phosphorylation/dephosphorylation. The protein is Putative phosphoenolpyruvate synthase regulatory protein of Sodalis glossinidius (strain morsitans).